The primary structure comprises 401 residues: Exodeoxyribonuclease 7 large subunit (401 aa).

The protein belongs to the XseA family. In terms of assembly, heterooligomer composed of large and small subunits.

The protein resides in the cytoplasm. The catalysed reaction is Exonucleolytic cleavage in either 5'- to 3'- or 3'- to 5'-direction to yield nucleoside 5'-phosphates.. In terms of biological role, bidirectionally degrades single-stranded DNA into large acid-insoluble oligonucleotides, which are then degraded further into small acid-soluble oligonucleotides. This Clostridium botulinum (strain Hall / ATCC 3502 / NCTC 13319 / Type A) protein is Exodeoxyribonuclease 7 large subunit.